The primary structure comprises 293 residues: MPWIQLKLNTTGANAEDLSDALMEAGAVSITFQDTHDTPVFEPLPGETRLWGDTDVIGLFDAETDMKEVVAILENHPLLGAGFAHKIEQLEDKDWEREWMDNFHPMRFGERLWICPSWRDVPDENAVNVMLDPGLAFGTGTHPTTSLCLQWLDSLDLTGKTVIDFGCGSGILAIAALKLGAAKAIGIDIDPQAIQASRDNAERNGVSDRLELYLPKDQPEEMKADVVVANILAGPLRELAPLISVLPVSGGLLGLSGILASQAESVCEAYADSFALDPVVEKEEWCRITGRKN.

Residues Thr145, Gly166, Asp188, and Asn230 each coordinate S-adenosyl-L-methionine.

This sequence belongs to the methyltransferase superfamily. PrmA family.

It localises to the cytoplasm. The enzyme catalyses L-lysyl-[protein] + 3 S-adenosyl-L-methionine = N(6),N(6),N(6)-trimethyl-L-lysyl-[protein] + 3 S-adenosyl-L-homocysteine + 3 H(+). In terms of biological role, methylates ribosomal protein L11. This Escherichia coli O7:K1 (strain IAI39 / ExPEC) protein is Ribosomal protein L11 methyltransferase.